A 155-amino-acid chain; its full sequence is DNA gyrase inhibitor (155 aa).

Belongs to the DNA gyrase inhibitor family. In terms of assembly, interacts with DNA gyrase.

Its subcellular location is the cytoplasm. Inhibits the supercoiling activity of DNA gyrase. Acts by inhibiting DNA gyrase at an early step, prior to (or at the step of) binding of DNA by the gyrase. It protects cells against toxins that target DNA gyrase, by inhibiting activity of these toxins and reducing the formation of lethal double-strand breaks in the cell. In Escherichia fergusonii (strain ATCC 35469 / DSM 13698 / CCUG 18766 / IAM 14443 / JCM 21226 / LMG 7866 / NBRC 102419 / NCTC 12128 / CDC 0568-73), this protein is DNA gyrase inhibitor.